The primary structure comprises 520 residues: D-aminopeptidase (520 aa).

Serine 62 functions as the Nucleophile in the catalytic mechanism. The active-site Proton donor/acceptor is the lysine 65. The interval 477-487 is important for specificity; the sequence is QRSMDAPSPGE. Residue aspartate 481 coordinates substrate.

It belongs to the peptidase S12 family. Homodimer.

It carries out the reaction Release of an N-terminal D-amino acid from a peptide, Xaa-|-Yaa-, in which Xaa is preferably D-Ala, D-Ser or D-Thr. D-amino acid amides and methyl esters also are hydrolyzed, as is glycine amide.. Inhibited by beta-lactam compounds such as 6-aminopenicillic acid, 7-aminocephalosporanic acid, benzylpenicillin and ampicillin. Inhibited by p-chloromercuribenzoate. Its function is as follows. Hydrolyzes N-terminal residues in D-amino acid-containing peptides. This chain is D-aminopeptidase, found in Brucella anthropi (strain ATCC 49188 / DSM 6882 / CCUG 24695 / JCM 21032 / LMG 3331 / NBRC 15819 / NCTC 12168 / Alc 37) (Ochrobactrum anthropi).